Here is a 194-residue protein sequence, read N- to C-terminus: Protein GrpE (194 aa).

The span at 1 to 24 (MEEKDKEEKVTGENLEPEDKNLEQ) shows a compositional bias: basic and acidic residues. Positions 1–41 (MEEKDKEEKVTGENLEPEDKNLEQEDKEEVVGPQEEQQIDE) are disordered.

This sequence belongs to the GrpE family. Homodimer.

It localises to the cytoplasm. Participates actively in the response to hyperosmotic and heat shock by preventing the aggregation of stress-denatured proteins, in association with DnaK and GrpE. It is the nucleotide exchange factor for DnaK and may function as a thermosensor. Unfolded proteins bind initially to DnaJ; upon interaction with the DnaJ-bound protein, DnaK hydrolyzes its bound ATP, resulting in the formation of a stable complex. GrpE releases ADP from DnaK; ATP binding to DnaK triggers the release of the substrate protein, thus completing the reaction cycle. Several rounds of ATP-dependent interactions between DnaJ, DnaK and GrpE are required for fully efficient folding. This Carboxydothermus hydrogenoformans (strain ATCC BAA-161 / DSM 6008 / Z-2901) protein is Protein GrpE.